A 122-amino-acid chain; its full sequence is Small ribosomal subunit protein uS13 (122 aa).

A disordered region spans residues 96–122 (LPVHGQRTKTNARTRKGPARTVAGKKK).

Belongs to the universal ribosomal protein uS13 family. Part of the 30S ribosomal subunit. Forms a loose heterodimer with protein S19. Forms two bridges to the 50S subunit in the 70S ribosome.

In terms of biological role, located at the top of the head of the 30S subunit, it contacts several helices of the 16S rRNA. In the 70S ribosome it contacts the 23S rRNA (bridge B1a) and protein L5 of the 50S subunit (bridge B1b), connecting the 2 subunits; these bridges are implicated in subunit movement. Contacts the tRNAs in the A and P-sites. This Geotalea daltonii (strain DSM 22248 / JCM 15807 / FRC-32) (Geobacter daltonii) protein is Small ribosomal subunit protein uS13.